Reading from the N-terminus, the 427-residue chain is Enolase (427 aa).

Residue Gln163 coordinates (2R)-2-phosphoglycerate. Glu205 (proton donor) is an active-site residue. Mg(2+) is bound by residues Asp242, Glu285, and Asp312. (2R)-2-phosphoglycerate is bound by residues Lys337, Arg366, Ser367, and Lys388. Residue Lys337 is the Proton acceptor of the active site.

Belongs to the enolase family. Mg(2+) serves as cofactor.

Its subcellular location is the cytoplasm. The protein localises to the secreted. It is found in the cell surface. It carries out the reaction (2R)-2-phosphoglycerate = phosphoenolpyruvate + H2O. The protein operates within carbohydrate degradation; glycolysis; pyruvate from D-glyceraldehyde 3-phosphate: step 4/5. In terms of biological role, catalyzes the reversible conversion of 2-phosphoglycerate (2-PG) into phosphoenolpyruvate (PEP). It is essential for the degradation of carbohydrates via glycolysis. The sequence is that of Enolase from Herminiimonas arsenicoxydans.